The primary structure comprises 190 residues: Cancer-related nucleoside-triphosphatase (190 aa).

N-acetylalanine is present on A2. ATP is bound by residues 9–16 (GPPGVGKT) and 109–116 (VCVIDEIG). K165 is subject to N6-acetyllysine.

The protein belongs to the THEP1 NTPase family. In terms of assembly, monomer.

It catalyses the reaction a ribonucleoside 5'-triphosphate + H2O = a ribonucleoside 5'-diphosphate + phosphate + H(+). It carries out the reaction 5-methyl-UTP + H2O = 5-methyl-UDP + phosphate + H(+). The enzyme catalyses CTP + H2O = CDP + phosphate + H(+). The catalysed reaction is ATP + H2O = ADP + phosphate + H(+). It catalyses the reaction GTP + H2O = GDP + phosphate + H(+). In terms of biological role, has nucleotide phosphatase activity towards ATP, GTP, CTP, TTP and UTP. Hydrolyzes nucleoside diphosphates with lower efficiency. The sequence is that of Cancer-related nucleoside-triphosphatase from Homo sapiens (Human).